The primary structure comprises 209 residues: MDCVTYAKIIMGNCNKTAVIHSTKDDRDISLCEKEIKSTLNLGKREREFQGELKKRFNNIILKTESRQGSKVDYNRDCIVDMIYTPWDVKEYATMDKMLFLKFSNGARLATTYNKKRLAVNLRVYNNINNFELINEGQLAVFFYVWRNTAGMKLLDYKHCIVNKISSVLFSEENIREYIRCILTDNEYDYVEANDMTHDWKFDNYFIEK.

This is an uncharacterized protein from Magallana gigas (Pacific oyster).